Reading from the N-terminus, the 327-residue chain is 2-keto-3-deoxygluconate permease (327 aa).

The next 10 membrane-spanning stretches (helical) occupy residues 10 to 30 (IPGG…TFSP), 42 to 62 (GMIT…GASI), 73 to 93 (KSGT…AIAS), 95 to 115 (IIPE…LALV), 139 to 159 (AGAF…IILG), 163 to 183 (IASF…VGFA), 199 to 219 (VQTL…LTVI), 224 to 244 (LLGI…LIIA), 254 to 274 (TAGI…VLIA), and 289 to 309 (SLVA…TSIW).

It belongs to the KdgT transporter family.

It localises to the cell inner membrane. The enzyme catalyses 2-dehydro-3-deoxy-D-gluconate(in) + H(+)(in) = 2-dehydro-3-deoxy-D-gluconate(out) + H(+)(out). Its function is as follows. Catalyzes the proton-dependent uptake of 2-keto-3-deoxygluconate (KDG) into the cell. This is 2-keto-3-deoxygluconate permease from Escherichia coli O139:H28 (strain E24377A / ETEC).